The sequence spans 155 residues: MIALLQRVTQAQVTVAGEVIARIGPGLVVLVGIERGDGPPQAERLLERLLSYRVFADSKGHMNLSLADVEGALLVVPQFTLAADTGKGTRPSFTPAAPPPLGKQIFEYLFAQAKARYSRCAAGRFGAHMQLSLTNDGPVTFTLQIPPAVQTATTE.

The short motif at 137 to 138 (GP) is the Gly-cisPro motif, important for rejection of L-amino acids element.

It belongs to the DTD family. Homodimer.

The protein localises to the cytoplasm. The catalysed reaction is glycyl-tRNA(Ala) + H2O = tRNA(Ala) + glycine + H(+). The enzyme catalyses a D-aminoacyl-tRNA + H2O = a tRNA + a D-alpha-amino acid + H(+). In terms of biological role, an aminoacyl-tRNA editing enzyme that deacylates mischarged D-aminoacyl-tRNAs. Also deacylates mischarged glycyl-tRNA(Ala), protecting cells against glycine mischarging by AlaRS. Acts via tRNA-based rather than protein-based catalysis; rejects L-amino acids rather than detecting D-amino acids in the active site. By recycling D-aminoacyl-tRNA to D-amino acids and free tRNA molecules, this enzyme counteracts the toxicity associated with the formation of D-aminoacyl-tRNA entities in vivo and helps enforce protein L-homochirality. The sequence is that of D-aminoacyl-tRNA deacylase from Nitrosococcus oceani (strain ATCC 19707 / BCRC 17464 / JCM 30415 / NCIMB 11848 / C-107).